The following is a 383-amino-acid chain: Transposase InsI for insertion sequence element IS30C (383 aa).

The Integrase catalytic domain maps to 213–379 (VNGTPIHERS…TPKEIIERGV (167 aa)).

The protein belongs to the transposase IS30 family.

Its function is as follows. Required for the transposition of the insertion element. This chain is Transposase InsI for insertion sequence element IS30C (insI3), found in Escherichia coli (strain K12).